A 130-amino-acid polypeptide reads, in one-letter code: Small ribosomal subunit protein uS9 (130 aa).

The interval 108 to 130 is disordered; the sequence is SREKERKKYGQRGARARFQYSKR.

Belongs to the universal ribosomal protein uS9 family.

This is Small ribosomal subunit protein uS9 from Solidesulfovibrio magneticus (strain ATCC 700980 / DSM 13731 / RS-1) (Desulfovibrio magneticus).